Reading from the N-terminus, the 409-residue chain is Alpha-1-antitrypsin (409 aa).

Residues 1 to 15 (LLLAGLCCLLPGSLA) form the signal peptide. The disordered stretch occupies residues 18-39 (PQGDAAQKTDTPPHDQNHPTLN). 4 N-linked (GlcNAc...) asparagine glycosylation sites follow: asparagine 61, asparagine 98, asparagine 136, and asparagine 262. The segment at 364 to 383 (GAMFLEAIPMSIPPEVKFNK) is RCL. Serine 374 is modified (phosphoserine).

The protein belongs to the serpin family. In terms of assembly, interacts with CELA2A. Interacts with ERGIC3 and LMAN1/ERGIC53. Interacts with PRSS1/Trypsin. Plasma.

Its subcellular location is the secreted. In terms of biological role, inhibitor of serine proteases. Its primary target is elastase, but it also has a moderate affinity for plasmin and thrombin. Inhibits trypsin, chymotrypsin and plasminogen activator. This is Alpha-1-antitrypsin (SERPINA1) from Papio anubis (Olive baboon).